The chain runs to 178 residues: Major urinary protein 4 (178 aa).

Residues 1-16 form the signal peptide; that stretch reads MKLLLCLGLTLVCIHA. Cys-80 and Cys-173 are disulfide-bonded.

The protein belongs to the calycin superfamily. Lipocalin family. Expressed in lacrimal gland, parotid gland, sublingual gland, nasal mucus, and vomeronasal organ.

Its subcellular location is the secreted. Binds pheromones, likely to displace pheromones complexed to urinary MUPs and transport them to the vomeronasal organ (VNO) where they associate with their neuronal receptor(s). MUP4 is highly specific for the male mouse pheromone 2-sec-butyl-4,5-dihydrothiazole (SBT). The protein is Major urinary protein 4 (Mup4) of Mus musculus (Mouse).